Reading from the N-terminus, the 253-residue chain is MGRKFFVGGNWKCNGTTDQVDKIVKILNEGQIASTDVVEVVVSPPYVFLPVVKSQLRPEIQVAAQNCWVKKGGAFTGEVSAEMLVNLSIPWVILGHSERRSLLGESNEFVGDKVAYALSQGLKVIACVGETLEQRESGSTMDVVAAQTKAISERIKDWTNVVVAYEPVWAIGTGKVATPDQAQEVHDGLRKWLAANVSAEVAESTRIIYGGSVTGANCKELAAKPDVDGFLVGGASLKPEFIDIINSATVKSA.

Residues asparagine 10 and lysine 12 each contribute to the substrate site. Residue histidine 96 is the Electrophile of the active site. The Proton acceptor role is filled by glutamate 166.

Belongs to the triosephosphate isomerase family. In terms of assembly, homodimer.

The protein localises to the cytoplasm. The catalysed reaction is D-glyceraldehyde 3-phosphate = dihydroxyacetone phosphate. It functions in the pathway carbohydrate biosynthesis; gluconeogenesis. Its pathway is carbohydrate degradation; glycolysis; D-glyceraldehyde 3-phosphate from glycerone phosphate: step 1/1. This is Triosephosphate isomerase, cytosolic (TPI) from Oryza sativa subsp. japonica (Rice).